The sequence spans 234 residues: Sugar fermentation stimulation protein homolog (234 aa).

The protein belongs to the SfsA family.

This Shewanella baltica (strain OS155 / ATCC BAA-1091) protein is Sugar fermentation stimulation protein homolog.